Here is a 1072-residue protein sequence, read N- to C-terminus: DNA-directed RNA polymerase subunit beta (1072 aa).

It belongs to the RNA polymerase beta chain family. In plastids the minimal PEP RNA polymerase catalytic core is composed of four subunits: alpha, beta, beta', and beta''. When a (nuclear-encoded) sigma factor is associated with the core the holoenzyme is formed, which can initiate transcription.

The protein resides in the plastid. It is found in the chloroplast. The catalysed reaction is RNA(n) + a ribonucleoside 5'-triphosphate = RNA(n+1) + diphosphate. DNA-dependent RNA polymerase catalyzes the transcription of DNA into RNA using the four ribonucleoside triphosphates as substrates. This is DNA-directed RNA polymerase subunit beta from Nasturtium officinale (Watercress).